The primary structure comprises 228 residues: Response regulator MprA (228 aa).

One can recognise a Response regulatory domain in the interval 2–116 (RILAVDDDRA…ELLARIRALL (115 aa)). At D46 the chain carries 4-aspartylphosphate. A DNA-binding region (ompR/PhoB-type) is located at residues 127-225 (SVAMSFSDLT…VRGVGYVLRE (99 aa)).

Phosphorylated and dephosphorylated by MprB.

The protein localises to the cytoplasm. Its function is as follows. Member of the two-component regulatory system MprB/MprA which contributes to maintaining a balance among several systems involved in stress resistance and is required for establishment and maintenance of persistent infection in the host. Functions as a transcriptional regulator that recognizes a 19-bp nucleotide motif comprizing two loosely conserved 8-bp direct DNA-binding motif repeats separated by a 3-bp spacer region. This Mycobacterium leprae (strain TN) protein is Response regulator MprA (mprA).